A 539-amino-acid polypeptide reads, in one-letter code: Putative S-adenosyl-L-methionine-dependent methyltransferase MAP_4079 (539 aa).

S-adenosyl-L-methionine-binding positions include D134 and 163-164 (DL). Positions 290–392 (AGYGRGRRRP…RGEPGERGGQ (103 aa)) are disordered. Over residues 301-313 (SATSCRGTCSSPR) the composition is skewed to polar residues. Positions 341–351 (HGFGNQCGGPD) are enriched in gly residues.

It belongs to the UPF0677 family.

Exhibits S-adenosyl-L-methionine-dependent methyltransferase activity. This is Putative S-adenosyl-L-methionine-dependent methyltransferase MAP_4079 from Mycolicibacterium paratuberculosis (strain ATCC BAA-968 / K-10) (Mycobacterium paratuberculosis).